A 156-amino-acid chain; its full sequence is Gamma-L-glutamyl-butirosin B gamma-glutamyl cyclotransferase (156 aa).

Residue 24–27 (YGTL) coordinates substrate. Glu-89 (proton acceptor) is an active-site residue.

Belongs to the gamma-glutamylcyclotransferase family.

It carries out the reaction gamma-L-glutamyl-butirosin B = butirosin B + 5-oxo-L-proline. The protein operates within antibiotic biosynthesis; butirosin biosynthesis. In terms of biological role, cyclotransferase that catalyzes the last step in the biosynthesis of the aminoglycoside antibiotic butirosin B. Cleaves the amide bond via transamidation using the alpha-amine of the terminal gamma-L-glutamate of the side chain, releasing it as the cyclic 5-oxoproline. The sequence is that of Gamma-L-glutamyl-butirosin B gamma-glutamyl cyclotransferase (btrG) from Niallia circulans (Bacillus circulans).